Reading from the N-terminus, the 185-residue chain is Ribosome-recycling factor (185 aa).

It belongs to the RRF family.

The protein localises to the cytoplasm. In terms of biological role, responsible for the release of ribosomes from messenger RNA at the termination of protein biosynthesis. May increase the efficiency of translation by recycling ribosomes from one round of translation to another. This chain is Ribosome-recycling factor, found in Desulfosudis oleivorans (strain DSM 6200 / JCM 39069 / Hxd3) (Desulfococcus oleovorans).